The sequence spans 234 residues: Peptidase E (234 aa).

Active-site charge relay system residues include S123, D138, and H160.

It belongs to the peptidase S51 family.

It localises to the cytoplasm. It carries out the reaction Dipeptidase E catalyzes the hydrolysis of dipeptides Asp-|-Xaa. It does not act on peptides with N-terminal Glu, Asn or Gln, nor does it cleave isoaspartyl peptides.. Hydrolyzes dipeptides containing N-terminal aspartate residues. May play a role in allowing the cell to use peptide aspartate to spare carbon otherwise required for the synthesis of the aspartate family of amino acids. This is Peptidase E from Pasteurella multocida (strain Pm70).